We begin with the raw amino-acid sequence, 171 residues long: S-ribosylhomocysteine lyase (171 aa).

Histidine 54, histidine 58, and cysteine 128 together coordinate Fe cation.

Belongs to the LuxS family. In terms of assembly, homodimer. The cofactor is Fe cation.

The enzyme catalyses S-(5-deoxy-D-ribos-5-yl)-L-homocysteine = (S)-4,5-dihydroxypentane-2,3-dione + L-homocysteine. In terms of biological role, involved in the synthesis of autoinducer 2 (AI-2) which is secreted by bacteria and is used to communicate both the cell density and the metabolic potential of the environment. The regulation of gene expression in response to changes in cell density is called quorum sensing. Catalyzes the transformation of S-ribosylhomocysteine (RHC) to homocysteine (HC) and 4,5-dihydroxy-2,3-pentadione (DPD). This Edwardsiella ictaluri (strain 93-146) protein is S-ribosylhomocysteine lyase.